The following is a 267-amino-acid chain: 3-methyl-2-oxobutanoate hydroxymethyltransferase (267 aa).

Mg(2+) is bound by residues aspartate 46 and aspartate 85. Residues 46–47 (DS), aspartate 85, and lysine 115 each bind 3-methyl-2-oxobutanoate. Residue glutamate 117 coordinates Mg(2+). Glutamate 184 acts as the Proton acceptor in catalysis.

It belongs to the PanB family. As to quaternary structure, homodecamer; pentamer of dimers. It depends on Mg(2+) as a cofactor.

Its subcellular location is the cytoplasm. The catalysed reaction is 3-methyl-2-oxobutanoate + (6R)-5,10-methylene-5,6,7,8-tetrahydrofolate + H2O = 2-dehydropantoate + (6S)-5,6,7,8-tetrahydrofolate. It participates in cofactor biosynthesis; (R)-pantothenate biosynthesis; (R)-pantoate from 3-methyl-2-oxobutanoate: step 1/2. Catalyzes the reversible reaction in which hydroxymethyl group from 5,10-methylenetetrahydrofolate is transferred onto alpha-ketoisovalerate to form ketopantoate. This is 3-methyl-2-oxobutanoate hydroxymethyltransferase from Syntrophotalea carbinolica (strain DSM 2380 / NBRC 103641 / GraBd1) (Pelobacter carbinolicus).